A 166-amino-acid polypeptide reads, in one-letter code: Specificity protein transcription factor 2 (166 aa).

Residues 17–45 (SYHHSLPSISPPDSPASTSASSSSSSIGA) form a disordered region. Residues 31–42 (PASTSASSSSSS) show a composition bias toward low complexity. 3 consecutive C2H2-type zinc fingers follow at residues 77–101 (HLCS…LRKH), 107–131 (FVCD…KRTH), and 137–160 (FACK…TSVH).

This sequence belongs to the Sp1 C2H2-type zinc-finger protein family.

Its function is as follows. Transcription factor. Probably acts downstream of the Wnt signaling pathway. This chain is Specificity protein transcription factor 2, found in Caenorhabditis elegans.